The chain runs to 1293 residues: Putative DNA-directed RNA polymerase 008R (1293 aa).

Residues cysteine 61, cysteine 64, cysteine 71, histidine 74, cysteine 99, cysteine 102, and cysteine 123 each contribute to the Zn(2+) site. Residues 270–339 (TNRKPMAGIK…PVMVTPFNVS (70 aa)) mediate DNA binding. The span at 354–376 (EMRDGTVHRPSEWRPSHGDHMET) shows a compositional bias: basic and acidic residues. The disordered stretch occupies residues 354 to 390 (EMRDGTVHRPSEWRPSHGDHMETADGSPLGRVTRPSY). Mg(2+) contacts are provided by aspartate 474, aspartate 476, and aspartate 478. The alpha-amanitin binding stretch occupies residues 724–734 (GQQYVGGSRPG). Positions 776–788 (PREVFFHAKSGRE) are bridging helix.

The protein belongs to the RNA polymerase beta' chain family.

The catalysed reaction is RNA(n) + a ribonucleoside 5'-triphosphate = RNA(n+1) + diphosphate. In terms of biological role, component of the DNA-dependent RNA polymerase that catalyzes the transcription of DNA into RNA using the four ribonucleoside triphosphates as substrates. Largest and catalytic component of RNA polymerase II which synthesizes mRNA precursors and many functional non-coding RNAs. Forms the polymerase active center together with the second largest subunit. This is Putative DNA-directed RNA polymerase 008R from Frog virus 3 (isolate Goorha) (FV-3).